A 545-amino-acid polypeptide reads, in one-letter code: Ribulokinase (545 aa).

It belongs to the ribulokinase family.

It catalyses the reaction D-ribulose + ATP = D-ribulose 5-phosphate + ADP + H(+). It carries out the reaction L-ribulose + ATP = L-ribulose 5-phosphate + ADP + H(+). The protein operates within carbohydrate degradation; L-arabinose degradation via L-ribulose; D-xylulose 5-phosphate from L-arabinose (bacterial route): step 2/3. The chain is Ribulokinase from Staphylococcus aureus (strain USA300).